We begin with the raw amino-acid sequence, 24 residues long: Brevinin-1Bd (24 aa).

Cys18 and Cys24 are joined by a disulfide.

In terms of tissue distribution, expressed by the skin glands.

The protein resides in the secreted. Functionally, antibacterial activity against Gram-positive bacterium S.aureus and Gram-negative bacterium E.coli. Has activity against C.albicans. The sequence is that of Brevinin-1Bd from Lithobates berlandieri (Rio Grande leopard frog).